Here is a 720-residue protein sequence, read N- to C-terminus: Viral guanylyltransferase VP3 (720 aa).

It is found in the virion. The enzyme catalyses a 5'-end diphospho-ribonucleoside in mRNA + GTP + H(+) = a 5'-end (5'-triphosphoguanosine)-ribonucleoside in mRNA + diphosphate. The catalysed reaction is a 5'-end (5'-triphosphoguanosine)-ribonucleoside in mRNA + S-adenosyl-L-methionine = a 5'-end (N(7)-methyl 5'-triphosphoguanosine)-ribonucleoside in mRNA + S-adenosyl-L-homocysteine. Its function is as follows. Outer capsid protein involved in mRNA capping. Catalyzes the last 3 enzymatic activities for formation of the 5' cap structure on the viral plus-strand transcripts, namely the RNA guanylyltransferase, RNA-7N- and RNA-2'O-methyltransferase activities. The protein is Viral guanylyltransferase VP3 (Segment-3) of Banna virus (BAV).